We begin with the raw amino-acid sequence, 260 residues long: Acyl-[acyl-carrier-protein]--UDP-N-acetylglucosamine O-acyltransferase (260 aa).

This sequence belongs to the transferase hexapeptide repeat family. LpxA subfamily. Homotrimer.

The protein localises to the cytoplasm. It carries out the reaction a (3R)-hydroxyacyl-[ACP] + UDP-N-acetyl-alpha-D-glucosamine = a UDP-3-O-[(3R)-3-hydroxyacyl]-N-acetyl-alpha-D-glucosamine + holo-[ACP]. It functions in the pathway glycolipid biosynthesis; lipid IV(A) biosynthesis; lipid IV(A) from (3R)-3-hydroxytetradecanoyl-[acyl-carrier-protein] and UDP-N-acetyl-alpha-D-glucosamine: step 1/6. Functionally, involved in the biosynthesis of lipid A, a phosphorylated glycolipid that anchors the lipopolysaccharide to the outer membrane of the cell. This Sulfurovum sp. (strain NBC37-1) protein is Acyl-[acyl-carrier-protein]--UDP-N-acetylglucosamine O-acyltransferase.